The chain runs to 571 residues: Urease subunit alpha (571 aa).

A Urease domain is found at 133–571; that stretch reads GGIDTHVHFV…LPLTQRYFLF (439 aa). Residues His138, His140, and Lys221 each contribute to the Ni(2+) site. Residue Lys221 is modified to N6-carboxylysine. His223 lines the substrate pocket. Ni(2+) contacts are provided by His250 and His276. Residue His324 is the Proton donor of the active site. Residue Asp364 coordinates Ni(2+).

It belongs to the metallo-dependent hydrolases superfamily. Urease alpha subunit family. Heterotrimer of UreA (gamma), UreB (beta) and UreC (alpha) subunits. Three heterotrimers associate to form the active enzyme. Ni cation serves as cofactor. Post-translationally, carboxylation allows a single lysine to coordinate two nickel ions.

The protein resides in the cytoplasm. The catalysed reaction is urea + 2 H2O + H(+) = hydrogencarbonate + 2 NH4(+). It functions in the pathway nitrogen metabolism; urea degradation; CO(2) and NH(3) from urea (urease route): step 1/1. The polypeptide is Urease subunit alpha (Staphylococcus xylosus).